Consider the following 267-residue polypeptide: DNA repair protein RecO (267 aa).

This sequence belongs to the RecO family.

In terms of biological role, involved in DNA repair and RecF pathway recombination. The chain is DNA repair protein RecO from Moorella thermoacetica (strain ATCC 39073 / JCM 9320).